Reading from the N-terminus, the 193-residue chain is Ion-translocating oxidoreductase complex subunit A (193 aa).

Helical transmembrane passes span 5-25 (LLLL…FLGL), 39-59 (VGMG…SYLM), 63-83 (ILIP…VIAV), 102-122 (LLGI…VALL), 134-154 (IIYG…FAAM), and 171-191 (SIAM…TGLI).

It belongs to the NqrDE/RnfAE family. As to quaternary structure, the complex is composed of six subunits: RnfA, RnfB, RnfC, RnfD, RnfE and RnfG.

Its subcellular location is the cell inner membrane. Its function is as follows. Part of a membrane-bound complex that couples electron transfer with translocation of ions across the membrane. This is Ion-translocating oxidoreductase complex subunit A from Aeromonas salmonicida (strain A449).